The chain runs to 146 residues: Cytochrome c-556 (146 aa).

The first 24 residues, 1–24 (MCMKLKTITAAMLFGCLCAGAVYA), serve as a signal peptide directing secretion. Positions 35, 135, 138, and 139 each coordinate heme c.

In terms of assembly, monomer. Post-translationally, binds 1 heme c group covalently per subunit.

Low-spin monoheme cytochrome c. In Agrobacterium fabrum (strain C58 / ATCC 33970) (Agrobacterium tumefaciens (strain C58)), this protein is Cytochrome c-556.